The primary structure comprises 293 residues: Cep170-like protein (293 aa).

Disordered regions lie at residues 78 to 110 and 217 to 270; these read PPLV…LTIT and FPSA…AESE. Positions 227 to 245 are enriched in polar residues; the sequence is KQKSSPVNNHHSPGQTPTL.

Belongs to the CEP170 family.

The chain is Cep170-like protein (CEP170P1) from Homo sapiens (Human).